The chain runs to 272 residues: MMIHGFQSSHRDFCFGPWKLTASKTHIMKSADVEKLADELHMPSLPEMMFGDNVLRIQHGSGFGIEFNATDALRCVNNYQGMLKVACAEEWQESRTEGEHSKEVIKPYDWTYTTDYKGTLLGESLKLKVVPTTDHIDTEKLKAREQIKFFEEVLLFEDELHDHGVSSLSVKIRVMPSSFFLLLRFFLRIDGVLIRMNDTRLYHEADKTYMLREYTSRESKISSLMHVPPSLFTEPNEISQYLPIKEAVCEKLIFPERIDPNPADSQKSTQVE.

N6-acetyllysine is present on K106. An interaction with PPP2CA region spans residues 173 to 272 (RVMPSSFFLL…ADSQKSTQVE (100 aa)). S265 carries the post-translational modification Phosphoserine.

This sequence belongs to the TIP41 family. As to quaternary structure, isoform 1 interacts with PPP2CA. Isoform 2 does not interact with PPP2CA. Interacts with PPP2CB, PPP4C and PPP6C. Interacts with IGBP1; the interaction is dependent on PPP2CA. Associates with a protein phosphatase 2A PP2A(C):IGBP1 complex. Interacts with PPP4C and PPP4R2.

The protein localises to the cytoplasm. In terms of biological role, may be a allosteric regulator of serine/threonine-protein phosphatase 2A (PP2A). Isoform 1 inhibits catalytic activity of the PP2A(D) core complex in vitro. The PP2A(C):TIPRL complex does not show phosphatase activity. Acts as a negative regulator of serine/threonine-protein phosphatase 4 probably by inhibiting the formation of the active PPP4C:PPP4R2 complex; the function is proposed to implicate it in DNA damage response by promoting H2AX phosphorylated on Ser-140 (gamma-H2AX). May play a role in the regulation of ATM/ATR signaling pathway controlling DNA replication and repair. In Homo sapiens (Human), this protein is TIP41-like protein (TIPRL).